We begin with the raw amino-acid sequence, 959 residues long: Kinesin-like protein NACK1 (959 aa).

Positions 1-28 (MTVRTPGTPASKIDKTPATTPNGHRGRE) are disordered. The Kinesin motor domain maps to 30–353 (KIVVTVRLRP…LYFATRAKEV (324 aa)). ATP is bound at residue 117 to 124 (GQTSSGKT). Position 145 is a phosphothreonine (Thr145). Positions 362–429 (VVSDKQLVKH…LRRKLQEEQG (68 aa)) form a coiled coil. 4 disordered regions span residues 417–438 (VDEL…SVSP), 451–473 (SPNL…GRQS), 598–640 (LPSN…FLKS), and 658–700 (NRAP…SVNM). 2 stretches are compositionally biased toward basic and acidic residues: residues 418–429 (DELRRKLQEEQG) and 454–466 (LEEK…ERTR). The stretch at 557–598 (KSVSANLKEEIARLHSQGSTIADLEEQLENVQKSLDKLVMSL) forms a coiled coil. Positions 600-611 (SNNDQQSNNDTT) are enriched in low complexity. Residues 613–623 (KAKHPSKKKKL) show a composition bias toward basic residues. The segment covering 630-640 (NSINRQNFLKS) has biased composition (polar residues). Residues Thr675 and Thr690 each carry the phosphothreonine modification. Residues 685 to 756 (SSKEGTPYRR…EANEAAGYNL (72 aa)) form a required for the binding to NPK1 region.

This sequence belongs to the TRAFAC class myosin-kinesin ATPase superfamily. Kinesin family. KIN-7 subfamily. As to quaternary structure, interacts (via C-terminus) with NPK1 (via C-terminus). Phosphorylated at Thr-145, Thr-675 and Thr-690 by CDKAs and CDKBs. The phosphorylation occurs before metaphase and inhibits the interaction with NPK1 preventing the transition to cytokinesis.

Its subcellular location is the cytoplasm. It is found in the nucleus. The protein localises to the cytoskeleton. The protein resides in the phragmoplast. Probable plus end-directed motor protein that functions in the NACK-PQR (NPK1-NQK1/MEK1-NRK1) MAP kinase signaling pathway, which is essential for somatic cell cytokinesis, especially for the cell-plate formation and its expansion. Regulates the activity and the localization of NPK1 by association through the non-catalytic region of the kinase. The protein is Kinesin-like protein NACK1 (NACK1) of Nicotiana tabacum (Common tobacco).